A 369-amino-acid polypeptide reads, in one-letter code: Maltose/maltodextrin import ATP-binding protein MalK (369 aa).

One can recognise an ABC transporter domain in the interval 4 to 234 (VTLRNVCKAY…PQNRFVAGFI (231 aa)). 36 to 43 (GPSGCGKS) contacts ATP.

Belongs to the ABC transporter superfamily. Maltooligosaccharide importer (TC 3.A.1.1.1) family. The complex is composed of two ATP-binding proteins (MalK), two transmembrane proteins (MalG and MalK) and a solute-binding protein (MalE).

It localises to the cell inner membrane. The catalysed reaction is D-maltose(out) + ATP + H2O = D-maltose(in) + ADP + phosphate + H(+). In terms of biological role, part of the ABC transporter complex MalEFGK involved in maltose/maltodextrin import. Responsible for energy coupling to the transport system. The sequence is that of Maltose/maltodextrin import ATP-binding protein MalK from Photobacterium profundum (strain SS9).